We begin with the raw amino-acid sequence, 380 residues long: Protein Wnt-5a (380 aa).

An N-terminal signal peptide occupies residues 1 to 35; the sequence is MKKSIGILSPGVALGTAGSAMSSKFFVMALAVFFS. A propeptide spanning residues 36 to 61 is cleaved from the precursor; it reads FAQVVIEANSWWSLGMNNPVQMSEVY. Cys104 and Cys115 form a disulfide bridge. Residues Asn114 and Asn120 are each glycosylated (N-linked (GlcNAc...) asparagine). 10 disulfides stabilise this stretch: Cys154/Cys162, Cys164/Cys182, Cys238/Cys252, Cys240/Cys247, Cys309/Cys340, Cys325/Cys335, Cys339/Cys379, Cys355/Cys370, Cys357/Cys367, and Cys362/Cys363. Residue Ser244 is the site of O-palmitoleoyl serine; by PORCN attachment. Residues Asn312 and Asn326 are each glycosylated (N-linked (GlcNAc...) asparagine).

This sequence belongs to the Wnt family. As to quaternary structure, forms a soluble 1:1 complex with AFM; this prevents oligomerization and is required for prolonged biological activity. The complex with AFM may represent the physiological form in body fluids. Homooligomer; disulfide-linked, leading to inactivation (in vitro). Interacts with PORCN. Interacts with WLS. Interacts with glypican GCP3. Interacts with PKD1 (via extracellular domain). Interacts with TMEM67. Post-translationally, glycosylation is necessary for secretion but not for activity. In terms of processing, palmitoleoylation is required for efficient binding to frizzled receptors. Depalmitoleoylation leads to Wnt signaling pathway inhibition. Proteolytic processing by TIKI1 and TIKI2 promotes oxidation and formation of large disulfide-bond oligomers, leading to inactivation of WNT5A.

The protein localises to the secreted. The protein resides in the extracellular space. Its subcellular location is the extracellular matrix. In terms of biological role, ligand for members of the frizzled family of seven transmembrane receptors. Can activate or inhibit canonical Wnt signaling, depending on receptor context. In the presence of FZD4, activates beta-catenin signaling. In the presence of ROR2, inhibits the canonical Wnt pathway by promoting beta-catenin degradation through a GSK3-independent pathway which involves down-regulation of beta-catenin-induced reporter gene expression. Suppression of the canonical pathway allows chondrogenesis to occur. Inhibits tumor formation. Stimulates cell migration. Decreases proliferation, migration, invasiveness and clonogenicity of carcinoma cells and may act as a tumor suppressor. Mediates motility of melanoma cells. Required during embryogenesis for extension of the primary anterior-posterior axis and for outgrowth of limbs and the genital tubercle. Inhibits type II collagen expression in chondrocytes. The chain is Protein Wnt-5a from Oryctolagus cuniculus (Rabbit).